The sequence spans 211 residues: Tudor-interacting repair regulator protein (211 aa).

Residues Lys10 and Lys151 each participate in a glycyl lysine isopeptide (Lys-Gly) (interchain with G-Cter in ubiquitin) cross-link. Residues 118–205 (TLEQLHAVEI…TEKQKKALEK (88 aa)) form an interaction with PXN region.

This sequence belongs to the Nudix hydrolase family. TIRR subfamily. As to quaternary structure, homodimer. Interacts with TP53BP1 (via the Tudor-like domain); interaction is abolished following DNA damage and TP53BP1 phosphorylation by ATM. Interacts (via the cytoplasmic part) with SDC4. Interacts with TGFB1I1 and PXN.

The protein resides in the nucleus. Functionally, key regulator of TP53BP1 required to stabilize TP53BP1 and regulate its recruitment to chromatin. In absence of DNA damage, interacts with the tandem Tudor-like domain of TP53BP1, masking the region that binds histone H4 dimethylated at 'Lys-20' (H4K20me2), thereby preventing TP53BP1 recruitment to chromatin and maintaining TP53BP1 localization to the nucleus. Following DNA damage, ATM-induced phosphorylation of TP53BP1 and subsequent recruitment of RIF1 leads to dissociate NUDT16L1/TIRR from TP53BP1, unmasking the tandem Tudor-like domain and allowing recruitment of TP53BP1 to DNA double strand breaks (DSBs). Binds U8 snoRNA. In Mus musculus (Mouse), this protein is Tudor-interacting repair regulator protein.